We begin with the raw amino-acid sequence, 232 residues long: Ribose-5-phosphate isomerase A (232 aa).

Substrate-binding positions include 34–37 (TGST), 89–92 (DGAD), and 102–105 (KGGG). The active-site Proton acceptor is Glu111. Lys129 lines the substrate pocket.

This sequence belongs to the ribose 5-phosphate isomerase family. Homodimer.

It carries out the reaction aldehydo-D-ribose 5-phosphate = D-ribulose 5-phosphate. It functions in the pathway carbohydrate degradation; pentose phosphate pathway; D-ribose 5-phosphate from D-ribulose 5-phosphate (non-oxidative stage): step 1/1. Its function is as follows. Catalyzes the reversible conversion of ribose-5-phosphate to ribulose 5-phosphate. The chain is Ribose-5-phosphate isomerase A from Protochlamydia amoebophila (strain UWE25).